A 270-amino-acid chain; its full sequence is Orotidine 5'-phosphate decarboxylase (270 aa).

Lys95 serves as the catalytic Proton donor.

Belongs to the OMP decarboxylase family. Type 2 subfamily.

The catalysed reaction is orotidine 5'-phosphate + H(+) = UMP + CO2. It functions in the pathway pyrimidine metabolism; UMP biosynthesis via de novo pathway; UMP from orotate: step 2/2. This is Orotidine 5'-phosphate decarboxylase from Dechloromonas aromatica (strain RCB).